A 238-amino-acid polypeptide reads, in one-letter code: LexA repressor (238 aa).

A DNA-binding region (H-T-H motif) is located at residues 26-46; that stretch reads FDEMKDALDLASKSGIHRLIT. Catalysis depends on for autocatalytic cleavage activity residues serine 158 and lysine 196.

It belongs to the peptidase S24 family. As to quaternary structure, homodimer.

The catalysed reaction is Hydrolysis of Ala-|-Gly bond in repressor LexA.. Functionally, represses a number of genes involved in the response to DNA damage (SOS response), including recA and lexA. In the presence of single-stranded DNA, RecA interacts with LexA causing an autocatalytic cleavage which disrupts the DNA-binding part of LexA, leading to derepression of the SOS regulon and eventually DNA repair. The chain is LexA repressor from Rhizobium meliloti (strain 1021) (Ensifer meliloti).